The sequence spans 407 residues: Nicotinate phosphoribosyltransferase (407 aa).

His224 is modified (phosphohistidine; by autocatalysis).

The protein belongs to the NAPRTase family. In terms of processing, transiently phosphorylated on a His residue during the reaction cycle. Phosphorylation strongly increases the affinity for substrates and increases the rate of nicotinate D-ribonucleotide production. Dephosphorylation regenerates the low-affinity form of the enzyme, leading to product release.

The catalysed reaction is nicotinate + 5-phospho-alpha-D-ribose 1-diphosphate + ATP + H2O = nicotinate beta-D-ribonucleotide + ADP + phosphate + diphosphate. It functions in the pathway cofactor biosynthesis; NAD(+) biosynthesis; nicotinate D-ribonucleotide from nicotinate: step 1/1. In terms of biological role, catalyzes the synthesis of beta-nicotinate D-ribonucleotide from nicotinate and 5-phospho-D-ribose 1-phosphate at the expense of ATP. In Pseudomonas savastanoi pv. phaseolicola (strain 1448A / Race 6) (Pseudomonas syringae pv. phaseolicola (strain 1448A / Race 6)), this protein is Nicotinate phosphoribosyltransferase.